A 135-amino-acid polypeptide reads, in one-letter code: Photosystem II extrinsic protein V (135 aa).

Positions 37, 40, 41, and 92 each coordinate heme c.

It belongs to the cytochrome c family. PsbV subfamily. As to quaternary structure, PSII is composed of 1 copy each of membrane proteins PsbA, PsbB, PsbC, PsbD, PsbE, PsbF, PsbH, PsbI, PsbJ, PsbK, PsbL, PsbM, PsbT, PsbX, PsbY, PsbZ, Psb30/Ycf12, peripheral proteins PsbO, CyanoQ (PsbQ), PsbU, PsbV and a large number of cofactors. It forms dimeric complexes. Heme c is required as a cofactor.

Its subcellular location is the cellular thylakoid membrane. Functionally, one of the extrinsic, lumenal subunits of photosystem II (PSII). PSII is a light-driven water plastoquinone oxidoreductase, using light energy to abstract electrons from H(2)O, generating a proton gradient subsequently used for ATP formation. The extrinsic proteins stabilize the structure of photosystem II oxygen-evolving complex (OEC), the ion environment of oxygen evolution and protect the OEC against heat-induced inactivation. Low-potential cytochrome c that plays a role in the OEC of PSII. The protein is Photosystem II extrinsic protein V of Microcystis aeruginosa.